The following is a 96-amino-acid chain: MKPHLLQNEELKELIAKIPGWEIISNHLEREFNFGDFIEAFSFMTKIALICEKYNHHPNWENVYSKVIIKLSTHDLGGITNLDQKIASEINEIFEK.

Belongs to the pterin-4-alpha-carbinolamine dehydratase family.

The enzyme catalyses (4aS,6R)-4a-hydroxy-L-erythro-5,6,7,8-tetrahydrobiopterin = (6R)-L-erythro-6,7-dihydrobiopterin + H2O. The protein is Putative pterin-4-alpha-carbinolamine dehydratase of Prochlorococcus marinus (strain MIT 9515).